The primary structure comprises 342 residues: C-X-C chemokine receptor type 6 (342 aa).

The Extracellular segment spans residues 1-32 (MAEHDYHEDYGFSSFNDSSQEEHQDFLQFSKV). The N-linked (GlcNAc...) asparagine glycan is linked to asparagine 16. The chain crosses the membrane as a helical span at residues 33-59 (FLPCMYLVVFVCGLVGNSLVLVISIFY). Topologically, residues 60-68 (HKLQSLTDV) are cytoplasmic. A helical transmembrane segment spans residues 69 to 89 (FLVNLPLADLVFVCTLPFWAY). Over 90–103 (AGIHEWVFGQVMCK) the chain is Extracellular. Cysteines 102 and 180 form a disulfide. Residues 104 to 125 (SLLGIYTINFYTSMLILTCITV) traverse the membrane as a helical segment. The Cytoplasmic portion of the chain corresponds to 126-143 (DRFIVVVKATKAYNQQAK). The chain crosses the membrane as a helical span at residues 144-164 (RMTWGKVTSLLIWVISLLVSL). The Extracellular portion of the chain corresponds to 165-187 (PQIIYGNVFNLDKLICGYHDEAI). Residues 188-215 (STVVLATQMTLGFFLPLLTMIVCYSVII) form a helical membrane-spanning segment. Topologically, residues 216 to 231 (KTLLHAGGFQKHRSLK) are cytoplasmic. A helical transmembrane segment spans residues 232 to 259 (IIFLVMAVFLLTQMPFNLMKFIRSTHWE). The Extracellular portion of the chain corresponds to 260–275 (YYAMTSFHYTIMVTEA). The helical transmembrane segment at 276–293 (IAYLRACLNPVLYAFVSL) threads the bilayer. Residues 294–342 (KFRKNFWKLVKDIGCLPYLGVSHQWKSSEDNSKTFSASHNVEATSMFQL) are Cytoplasmic-facing.

This sequence belongs to the G-protein coupled receptor 1 family. Expressed in lymphoid tissues and activated T cells.

The protein localises to the cell membrane. Receptor for the C-X-C chemokine CXCL16. Used as a coreceptor by SIVs and by strains of HIV-2 and m-tropic HIV-1. The protein is C-X-C chemokine receptor type 6 (CXCR6) of Homo sapiens (Human).